The chain runs to 297 residues: Ribosomal protein L11 methyltransferase (297 aa).

S-adenosyl-L-methionine contacts are provided by T152, G173, D195, and N234.

This sequence belongs to the methyltransferase superfamily. PrmA family.

It localises to the cytoplasm. It catalyses the reaction L-lysyl-[protein] + 3 S-adenosyl-L-methionine = N(6),N(6),N(6)-trimethyl-L-lysyl-[protein] + 3 S-adenosyl-L-homocysteine + 3 H(+). In terms of biological role, methylates ribosomal protein L11. The polypeptide is Ribosomal protein L11 methyltransferase (Cupriavidus taiwanensis (strain DSM 17343 / BCRC 17206 / CCUG 44338 / CIP 107171 / LMG 19424 / R1) (Ralstonia taiwanensis (strain LMG 19424))).